The sequence spans 214 residues: MATSEAPLLKRTAATLSDDMAVNYKLLHSPKFRALVVENVLSVTAFAFMARQTESLAGPEMETLNNCGVNGCGFTSFYQFKGVVGVYAAFWVYTVLLIGLYLFSRGPPPGTEFVVHALFTLCMIAFVSLSVISCTSTVIESDYSVCKNAAYAKASLVFAALVVVLNCATCAFVFKQWRSLQFVGMPENFRPFGRHRHKHGHHAGDADDAIPTHP.

Residues 1–82 (MATSEAPLLK…GFTSFYQFKG (82 aa)) are Cytoplasmic-facing. The chain crosses the membrane as a helical span at residues 83–103 (VVGVYAAFWVYTVLLIGLYLF). Residues 104–112 (SRGPPPGTE) are Extracellular-facing. A helical transmembrane segment spans residues 113 to 133 (FVVHALFTLCMIAFVSLSVIS). The Cytoplasmic portion of the chain corresponds to 134 to 153 (CTSTVIESDYSVCKNAAYAK). The chain crosses the membrane as a helical span at residues 154–174 (ASLVFAALVVVLNCATCAFVF). At 175–214 (KQWRSLQFVGMPENFRPFGRHRHKHGHHAGDADDAIPTHP) the chain is on the extracellular side. The interval 194-214 (RHRHKHGHHAGDADDAIPTHP) is disordered.

Belongs to the Casparian strip membrane proteins (CASP) family. Homodimer and heterodimers.

It is found in the cell membrane. The protein is CASP-like protein 0U1 of Ostreococcus tauri.